The following is a 192-amino-acid chain: Imidazoleglycerol-phosphate dehydratase (192 aa).

The protein belongs to the imidazoleglycerol-phosphate dehydratase family.

It is found in the cytoplasm. The catalysed reaction is D-erythro-1-(imidazol-4-yl)glycerol 3-phosphate = 3-(imidazol-4-yl)-2-oxopropyl phosphate + H2O. Its pathway is amino-acid biosynthesis; L-histidine biosynthesis; L-histidine from 5-phospho-alpha-D-ribose 1-diphosphate: step 6/9. In Methanocella arvoryzae (strain DSM 22066 / NBRC 105507 / MRE50), this protein is Imidazoleglycerol-phosphate dehydratase.